Here is a 37-residue protein sequence, read N- to C-terminus: Large ribosomal subunit protein bL36 (37 aa).

This sequence belongs to the bacterial ribosomal protein bL36 family.

The protein is Large ribosomal subunit protein bL36 of Mycoplasmopsis synoviae (strain 53) (Mycoplasma synoviae).